The chain runs to 466 residues: Ribulose bisphosphate carboxylase large chain (466 aa).

N6,N6,N6-trimethyllysine is present on K5. Residues N114 and T164 each contribute to the substrate site. K166 functions as the Proton acceptor in the catalytic mechanism. K168 serves as a coordination point for substrate. 3 residues coordinate Mg(2+): K192, D194, and E195. K192 carries the N6-carboxylysine modification. The active-site Proton acceptor is the H285. Substrate is bound by residues R286, H318, and S370.

Belongs to the RuBisCO large chain family. Type I subfamily. Heterohexadecamer of 8 large chains and 8 small chains; disulfide-linked. The disulfide link is formed within the large subunit homodimers. Mg(2+) serves as cofactor. The disulfide bond which can form in the large chain dimeric partners within the hexadecamer appears to be associated with oxidative stress and protein turnover.

The protein resides in the plastid. It localises to the chloroplast. The catalysed reaction is 2 (2R)-3-phosphoglycerate + 2 H(+) = D-ribulose 1,5-bisphosphate + CO2 + H2O. It carries out the reaction D-ribulose 1,5-bisphosphate + O2 = 2-phosphoglycolate + (2R)-3-phosphoglycerate + 2 H(+). In terms of biological role, ruBisCO catalyzes two reactions: the carboxylation of D-ribulose 1,5-bisphosphate, the primary event in carbon dioxide fixation, as well as the oxidative fragmentation of the pentose substrate in the photorespiration process. Both reactions occur simultaneously and in competition at the same active site. The protein is Ribulose bisphosphate carboxylase large chain of Hedera helix (English ivy).